The chain runs to 364 residues: DNA polymerase IV (364 aa).

The UmuC domain occupies 14–198 (IIHIDMDAFF…LPIEKFHGVG (185 aa)). Mg(2+) contacts are provided by Asp-18 and Asp-116. Residue Glu-117 is part of the active site.

The protein belongs to the DNA polymerase type-Y family. Monomer. It depends on Mg(2+) as a cofactor.

Its subcellular location is the cytoplasm. It carries out the reaction DNA(n) + a 2'-deoxyribonucleoside 5'-triphosphate = DNA(n+1) + diphosphate. Poorly processive, error-prone DNA polymerase involved in untargeted mutagenesis. Copies undamaged DNA at stalled replication forks, which arise in vivo from mismatched or misaligned primer ends. These misaligned primers can be extended by PolIV. Exhibits no 3'-5' exonuclease (proofreading) activity. May be involved in translesional synthesis, in conjunction with the beta clamp from PolIII. The chain is DNA polymerase IV from Streptococcus agalactiae serotype Ia (strain ATCC 27591 / A909 / CDC SS700).